The sequence spans 87 residues: Large ribosomal subunit protein eL31 (87 aa).

This sequence belongs to the eukaryotic ribosomal protein eL31 family.

This Methanoculleus marisnigri (strain ATCC 35101 / DSM 1498 / JR1) protein is Large ribosomal subunit protein eL31.